Here is a 113-residue protein sequence, read N- to C-terminus: Ribosome-associated factor Y (113 aa).

At Lys-66 the chain carries N6-acetyllysine. The disordered stretch occupies residues 91-113 (KGEARRAATSVKDANFVEEVEEE).

The protein belongs to the HPF/YfiA ribosome-associated protein family. YfiA subfamily. Associates mainly with 70S ribosomes.

During stationary phase, prevents 70S dimer formation, probably in order to regulate translation efficiency during transition between the exponential and the stationary phases. In addition, during environmental stress such as cold shock or excessive cell density at stationary phase, stabilizes the 70S ribosome against dissociation, inhibits translation initiation and increase translation accuracy. When normal growth conditions are restored, is quickly released from the ribosome. The protein is Ribosome-associated factor Y of Escherichia coli O157:H7.